The chain runs to 221 residues: MDNLVLLRHGNSLWNQENLFTGWVDVRLSELGEKEAKTAGQLLREANRYPDVLFTSLLTRSIQTAHIALMEIDRVWLPTFRSWRLNERHYGSLQGKNKAQVLEEFGEEQFNSWRRGYDTPPPPLHSQADDPRYEEPPPLSESLKDVQNRLLPYWQGVILPHLVAGKVVLVVAHGNSLRALVKHLECISDTDVCQLNIPTGIPLVYSIDPSGCATHPGRYLP.

Residues 8–15 (RHGNSLWN), 21–22 (TG), arginine 60, 87–90 (ERHY), lysine 98, 114–115 (RR), and 174–175 (GN) contribute to the substrate site. Histidine 9 serves as the catalytic Tele-phosphohistidine intermediate. Glutamate 87 acts as the Proton donor/acceptor in catalysis. Residues 114–140 (RRGYDTPPPPLHSQADDPRYEEPPPLS) are disordered.

This sequence belongs to the phosphoglycerate mutase family. BPG-dependent PGAM subfamily.

The enzyme catalyses (2R)-2-phosphoglycerate = (2R)-3-phosphoglycerate. It functions in the pathway carbohydrate degradation; glycolysis; pyruvate from D-glyceraldehyde 3-phosphate: step 3/5. Catalyzes the interconversion of 2-phosphoglycerate and 3-phosphoglycerate. The protein is 2,3-bisphosphoglycerate-dependent phosphoglycerate mutase of Tropheryma whipplei (strain TW08/27) (Whipple's bacillus).